The following is a 96-amino-acid chain: Prokineticin Bm8-e (96 aa).

A signal peptide spans M1–G19. Cystine bridges form between C26/C38, C32/C50, C37/C78, C60/C86, and C80/C95.

The protein belongs to the AVIT (prokineticin) family. Expressed by the skin glands.

It localises to the secreted. Its function is as follows. Potent agonist for both PKR1/PROKR1 and PKR2/PROKR2, and inducer of a potent and long-lasting hyperalgesia. Also potentiates capsaicin-induced TRPV1 current, when tested on DRG neurons. At subnanomolar concentrations, this protein both induces potent chemotaxis of macrophages and stimulates LPS-induced production of the pro-inflammatory cytokines IL-1 and IL-12. In vivo, potently stimulates the contraction of the guinea-pig gastrointestinal (GI) smooth muscle (nanomolar concentration). The protein is Prokineticin Bm8-e of Bombina maxima (Giant fire-bellied toad).